The primary structure comprises 119 residues: Ribonuclease P protein component (119 aa).

This sequence belongs to the RnpA family. Consists of a catalytic RNA component (M1 or rnpB) and a protein subunit.

It catalyses the reaction Endonucleolytic cleavage of RNA, removing 5'-extranucleotides from tRNA precursor.. RNaseP catalyzes the removal of the 5'-leader sequence from pre-tRNA to produce the mature 5'-terminus. It can also cleave other RNA substrates such as 4.5S RNA. The protein component plays an auxiliary but essential role in vivo by binding to the 5'-leader sequence and broadening the substrate specificity of the ribozyme. This chain is Ribonuclease P protein component, found in Corynebacterium diphtheriae (strain ATCC 700971 / NCTC 13129 / Biotype gravis).